The sequence spans 104 residues: Biogenesis of lysosome-related organelles complex 1 subunit BLS1 (104 aa).

The protein belongs to the BLOC1S1 family. In terms of assembly, component of the biogenesis of lysosome-related organelles complex-1 (BLOC-1).

It is found in the endosome. Component of the biogenesis of lysosome-related organelles complex-1 (BLOC-1), a complex involved in endosomal cargo sorting. This chain is Biogenesis of lysosome-related organelles complex 1 subunit BLS1 (BLS1), found in Kluyveromyces lactis (strain ATCC 8585 / CBS 2359 / DSM 70799 / NBRC 1267 / NRRL Y-1140 / WM37) (Yeast).